We begin with the raw amino-acid sequence, 96 residues long: Co-chaperonin GroES (96 aa).

It belongs to the GroES chaperonin family. As to quaternary structure, heptamer of 7 subunits arranged in a ring. Interacts with the chaperonin GroEL.

Its subcellular location is the cytoplasm. In terms of biological role, together with the chaperonin GroEL, plays an essential role in assisting protein folding. The GroEL-GroES system forms a nano-cage that allows encapsulation of the non-native substrate proteins and provides a physical environment optimized to promote and accelerate protein folding. GroES binds to the apical surface of the GroEL ring, thereby capping the opening of the GroEL channel. The protein is Co-chaperonin GroES of Legionella micdadei (Tatlockia micdadei).